A 105-amino-acid chain; its full sequence is Class II hydrophobin 1 (105 aa).

A signal peptide spans M1–A15. Disulfide bonds link C38-C87, C48-C78, C49-C58, and C88-C99.

It belongs to the cerato-ulmin hydrophobin family. As to quaternary structure, homotetramer. Further self-assembles to form highly ordered films at water-air interfaces through intermolecular interactions.

Its subcellular location is the secreted. It is found in the cell wall. Aerial growth, conidiation, and dispersal of filamentous fungi in the environment rely upon a capability of their secreting small amphipathic proteins called hydrophobins (HPBs) with low sequence identity. Class I can self-assemble into an outermost layer of rodlet bundles on aerial cell surfaces, conferring cellular hydrophobicity that supports fungal growth, development and dispersal; whereas Class II form highly ordered films at water-air interfaces through intermolecular interactions but contribute nothing to the rodlet structure. HYD1 is a class II hydrophobin that plays roles in conidiation and cuticle-bypassing infection by regulating the transcripts of frequency clock protein frq, and velvet protein vosA, as well as primordium formation via the mitogen-activated protein kinase signaling pathway. Also participates in stress response, including tolerance of mycelia to osmotic and oxidative stresses, and conidia to high or low temperature. Acts as a defensive factor against Calcarisporium cordycipiticola infection, probably via the formation of a physical barrier to inhibit the pathogen infection owing to its hydrophobicity or binding to the effector of C.cordycipiticola, hindering the recognition of the pathogen. Finally, regulates the transcription of the AreA transcription factor at different developmental stages via a positive feedback loop. The protein is Class II hydrophobin 1 of Cordyceps militaris (Caterpillar fungus).